The primary structure comprises 169 residues: MDPEHAKPESSEAPSGNLKQPETAAALSLILGALACFIITQANESFITITSLEICIVVFFILIYVLTLHHLLTYLHWPLLDLTNSIITAVFLSVVAILAMQEKKRRHLLYVGGSLCLTAVIVCCIDAFVVTTKMRTNLKRFLGVEVERKLSPAKDAYPETGPDAPQRPA.

In terms of domain architecture, MARVEL spans 17-135; the sequence is NLKQPETAAA…DAFVVTTKMR (119 aa). 4 consecutive transmembrane segments (helical) span residues 22 to 42, 46 to 66, 79 to 99, and 110 to 130; these read ETAA…ITQA, FITI…IYVL, LLDL…AILA, and YVGG…AFVV.

The protein belongs to the chemokine-like factor family. Highly expressed in testis.

Its subcellular location is the membrane. The chain is CKLF-like MARVEL transmembrane domain-containing protein 1 (CMTM1) from Homo sapiens (Human).